A 190-amino-acid polypeptide reads, in one-letter code: Thiamine biosynthesis protein X (190 aa).

An N-terminal signal peptide occupies residues 1–22 (MSISRTVFGIAATAALSAALVA). Cys-23 carries the N-palmitoyl cysteine lipid modification. Cys-23 carries the S-diacylglycerol cysteine lipid modification. Positions 43-68 (SQNPTSASSTSTSSATTTSSAPVEED) are disordered. The span at 47-63 (TSASSTSTSSATTTSSA) shows a compositional bias: low complexity.

It localises to the cell membrane. Functionally, is necessary for biosynthesis of the 4-methyl-5-(beta-hydroxyethyl)thiazol component from which thiamine is formed. This is Thiamine biosynthesis protein X (thiX) from Corynebacterium glutamicum (strain ATCC 13032 / DSM 20300 / JCM 1318 / BCRC 11384 / CCUG 27702 / LMG 3730 / NBRC 12168 / NCIMB 10025 / NRRL B-2784 / 534).